We begin with the raw amino-acid sequence, 1013 residues long: MSKKPPNRPGITFEIGARLEALDYLQKWYPSRIEKIDYEEGKMLVHFERWSHRYDEWIYWDSNRLRPLERPALRKEGLKDEEELFDFKAGEEVLARWTDCRYYPAKIEAINKEGTFTVQFYDGVIRCLKRMHIKAMPEDAKGQVKSQHPLSWCCPIDPAGSCNQSMGSEDWIALVKAAAAAAAKNKTGTKPRASANSNKEKERDGGKWFKLPSKKAETSTCIVTAEIEKKEELPTSSETFGLHIDTVPKIVFPQPESTLTNKRKNNQGNSFQAKRARLNKITGLLASKAVGVDGAERKEDCSATAPVLEQAISPKPQSQKKNEAVISSSANTQKPALLSSTLSSGKARSKKCKHESGESSGCIKTPKSPLAPELIQAKDLTLVSQLSSVINKTSSPQPVNPPRPCKHSERRRRSQRLATLPMPDDSLEKLSSSSSATDGKAFSISSQNQQQSSVPEVPAIAYVPLQKLGPCLPLDLSCGSEVTGSRTPHPSYHGGECPREEKEETPLFANPTSKVVSDVKGAAAATGISKTEKKVKLEEKTSTAFGKRKEKDKEKKEKRDKDHYKPKQKKKKKKKKKSKQHDYSDYEDSSLDFLERCSSPLTRSSGSSLAPRSTFTEKTTTYQYPRAILSVDLSGENLSDVEFLDDSSTESLLLSGDEYNQDFDSTNFEESQDEDDALNEIVRCICELDEENGFMIQCEECLCWQHSVCMGLLEDSIPEQYICYICRDPPGQRWSAKYRYDKEWLNNGRMYGLSFLKENYSHLNAKKIVSTHHLLADVYGVTEVLHGLQLKIGILKNKHHPDLHLWAYSGKRKDQDQAVAEAERKITPQDRANSEGKECVQNHKEPALRMEETYITSEHSYQKPQSFSQDCQSLTDPGSSDDDDASSFEEDGELRVPDKSHLLYKNRGVSEKNPASGNKVFVYNDKKGTEGPGDSHLQWQLNLLTHIENVQNEVTSRMDLIEKEVDVLESWLDFTGELEPPDPLARLPQLKRHLKQLLLDVGKVQQIATLCSV.

The 61-residue stretch at I11–P71 folds into the Tudor 1 domain. Glycyl lysine isopeptide (Lys-Gly) (interchain with G-Cter in SUMO2) cross-links involve residues K75 and K79. Residues F85 to K141 form the Tudor 2 domain. Disordered stretches follow at residues A183–G206, E309–S368, V389–V454, and V482–P511. Polar residues predominate over residues K315 to K346. S368 carries the post-translational modification Phosphoserine. The span at P404–Q415 shows a compositional bias: basic residues. Residue S432 is modified to Phosphoserine. Residues S443–S453 show a composition bias toward low complexity. Positions E496–T505 are enriched in basic and acidic residues. K530 is covalently cross-linked (Glycyl lysine isopeptide (Lys-Gly) (interchain with G-Cter in SUMO2)). Over residues K533–K565 the composition is skewed to basic and acidic residues. Positions K533–D585 are disordered. Residues P566–K579 show a composition bias toward basic residues. The PHD-type zinc finger occupies I681–P729. Positions R824–E852 are enriched in basic and acidic residues. The disordered stretch occupies residues R824 to E911. Residues Y854 to G878 show a composition bias toward polar residues. The span at S879 to G892 shows a compositional bias: acidic residues. K905 carries the N6-acetyllysine modification.

Interacts with methylated DNMT1 (DNMT1K142me1). Interacts with SOX2.

It localises to the nucleus. Is a negative regulator of proteasomal degradation of a set of methylated proteins, including DNMT1 and SOX2. Involved in the maintainance of embryonic stem cells pluripotency, through the regulation of SOX2 levels. In Mus musculus (Mouse), this protein is PHD finger protein 20-like protein 1 (Phf20l1).